The chain runs to 401 residues: Nodal homolog 3-A (401 aa).

An N-terminal signal peptide occupies residues 1–18; it reads MAFLSLFLCLVFSSPLMA. A propeptide spanning residues 19–274 is cleaved from the precursor; sequence MPPALQGRKA…KVNGFRRLRR (256 aa). N-linked (GlcNAc...) asparagine glycosylation is found at Asn168, Asn337, and Asn344. 2 disulfides stabilise this stretch: Cys299–Cys365 and Cys328–Cys396.

This sequence belongs to the TGF-beta family. In terms of assembly, monomer. The propeptide region interacts with bmp4 in a non-covalent manner. As to expression, expressed in the dorsal marginal region of late blastula, becoming restricted to the Spemann organizer at the early gastrula stage.

It is found in the secreted. In terms of biological role, exhibits mesoderm-dorsalizing activity and neural-inducing activity, but lacks mesoderm-inducing activity. Regulates the expression of specific mesodermal and neural genes. Induces convergent extension movements at the embryonic midline by activating the fgf signaling pathway to induce t/bra expression in the organizer region. Acts with wnt11 to induce Spemann organizer cells and induce axis formation. The unprocessed protein antagonizes bmp-signaling. The polypeptide is Nodal homolog 3-A (Xenopus tropicalis (Western clawed frog)).